Here is a 211-residue protein sequence, read N- to C-terminus: DNA-directed RNA polymerases I, II, and III subunit RPABC1 (211 aa).

Belongs to the archaeal Rpo5/eukaryotic RPB5 RNA polymerase subunit family. In terms of assembly, component of the RNA polymerase I (Pol I), RNA polymerase II (Pol II) and RNA polymerase III (Pol III) complexes consisting of at least 13, 12 and 17 subunits, respectively. In RNA Pol II, this subunit is present in 2-fold molar excess over the other subunits.

It localises to the nucleus. In terms of biological role, DNA-dependent RNA polymerase catalyzes the transcription of DNA into RNA using the four ribonucleoside triphosphates as substrates. Common component of RNA polymerases I, II and III which synthesize ribosomal RNA precursors, mRNA precursors and many functional non-coding RNAs, and small RNAs, such as 5S rRNA and tRNAs, respectively. Pol II is the central component of the basal RNA polymerase II transcription machinery. Pols are composed of mobile elements that move relative to each other. In Pol II, RPB5 is part of the lower jaw surrounding the central large cleft and thought to grab the incoming DNA template. Seems to be the major component in this process. The polypeptide is DNA-directed RNA polymerases I, II, and III subunit RPABC1 (rpb-5) (Caenorhabditis elegans).